A 292-amino-acid polypeptide reads, in one-letter code: MQSAHYTGRFAPSPSGPLHAGSLVAAMASYLDARAHQGRWLLRMEDVDEARTVQGAAQDIAASLSQLGMHWDGPVLVQSRRQQHYQRACAQLGERVYACGCTRKEIADSRLGMAADGAAIYPGTCRSGLAAGKRAHALRVRVPEPGQALEQIDFEDRWQGWQRQHLASAVGDFVLRRADGFWAYQLAVVVDDAEQGVTHIVRGADLLGSTARQIYLQSLLGYPTPTYLHLPLVTHADGEKLSKQNGAQALNLNRSLTLLHEAARFLGLEVARVDGVAAFWELAVLAWRRRYL.

Residues Arg-9 to Ser-13 and Glu-45 contribute to the L-glutamate site. The 'HIGH' region motif lies at Pro-12 to Ser-22. Zn(2+) is bound by residues Cys-99, Cys-101, Tyr-121, and Cys-125. L-glutamate contacts are provided by Tyr-184 and Arg-202. Residues Lys-240–Gln-244 carry the 'KMSKS' region motif. An ATP-binding site is contributed by Lys-243.

This sequence belongs to the class-I aminoacyl-tRNA synthetase family. GluQ subfamily. Zn(2+) serves as cofactor.

Its function is as follows. Catalyzes the tRNA-independent activation of glutamate in presence of ATP and the subsequent transfer of glutamate onto a tRNA(Asp). Glutamate is transferred on the 2-amino-5-(4,5-dihydroxy-2-cyclopenten-1-yl) moiety of the queuosine in the wobble position of the QUC anticodon. This is Glutamyl-Q tRNA(Asp) synthetase from Verminephrobacter eiseniae (strain EF01-2).